A 212-amino-acid chain; its full sequence is Ras-related protein Rab-15 (212 aa).

Residues S17, G18, V19, G20, K21, T22, C23, S35, S39, and T40 each contribute to the GTP site. A Mg(2+)-binding site is contributed by T22. 2 short sequence motifs (switch) span residues 31–45 (NEFH…GVDF) and 63–80 (DTAG…YYRR). Residues T40 and D63 each contribute to the Mg(2+) site. G66, N121, K122, D124, S151, and A152 together coordinate GTP. Residues 192–212 (ELEEDEGKPEGPANSSKTCWC) are disordered. S-geranylgeranyl cysteine attachment occurs at residues C210 and C212. Residue C212 is modified to Cysteine methyl ester.

The protein belongs to the small GTPase superfamily. Rab family. The GTP bound form of RAB15 interacts with REP15. Interacts (GTP-bound form) with MICAL1, MICAL3, MICALCL, EHBP1 and EHBP1L1. It depends on Mg(2+) as a cofactor.

The protein localises to the cell membrane. The enzyme catalyses GTP + H2O = GDP + phosphate + H(+). Regulated by guanine nucleotide exchange factors (GEFs) which promote the exchange of bound GDP for free GTP. Regulated by GTPase activating proteins (GAPs) which increase the GTP hydrolysis activity. Inhibited by GDP dissociation inhibitors (GDIs). In terms of biological role, the small GTPases Rab are key regulators of intracellular membrane trafficking, from the formation of transport vesicles to their fusion with membranes. Rabs cycle between an inactive GDP-bound form and an active GTP-bound form that is able to recruit to membranes different sets of downstream effectors directly responsible for vesicle formation, movement, tethering and fusion. RAB15 may act in concert with RAB3A in regulating aspects of synaptic vesicle membrane flow within the nerve terminal. This Mus musculus (Mouse) protein is Ras-related protein Rab-15.